We begin with the raw amino-acid sequence, 443 residues long: 3-isopropylmalate dehydratase large subunit (443 aa).

Residues cysteine 347, cysteine 407, and cysteine 410 each contribute to the [4Fe-4S] cluster site.

This sequence belongs to the aconitase/IPM isomerase family. LeuC type 1 subfamily. As to quaternary structure, heterodimer of LeuC and LeuD. [4Fe-4S] cluster is required as a cofactor.

The enzyme catalyses (2R,3S)-3-isopropylmalate = (2S)-2-isopropylmalate. Its pathway is amino-acid biosynthesis; L-leucine biosynthesis; L-leucine from 3-methyl-2-oxobutanoate: step 2/4. Functionally, catalyzes the isomerization between 2-isopropylmalate and 3-isopropylmalate, via the formation of 2-isopropylmaleate. The chain is 3-isopropylmalate dehydratase large subunit from Buchnera aphidicola subsp. Uroleucon aeneum.